Reading from the N-terminus, the 475-residue chain is Ribulose bisphosphate carboxylase large chain (475 aa).

Positions 1–2 (MS) are excised as a propeptide. An N-acetylproline modification is found at Pro-3. Lys-14 bears the N6,N6,N6-trimethyllysine mark. Substrate is bound by residues Asn-123 and Thr-173. Lys-175 serves as the catalytic Proton acceptor. Lys-177 is a substrate binding site. Positions 201, 203, and 204 each coordinate Mg(2+). An N6-carboxylysine modification is found at Lys-201. The Proton acceptor role is filled by His-294. Residues Arg-295, His-327, and Ser-379 each coordinate substrate.

This sequence belongs to the RuBisCO large chain family. Type I subfamily. As to quaternary structure, heterohexadecamer of 8 large chains and 8 small chains; disulfide-linked. The disulfide link is formed within the large subunit homodimers. It depends on Mg(2+) as a cofactor. The disulfide bond which can form in the large chain dimeric partners within the hexadecamer appears to be associated with oxidative stress and protein turnover.

Its subcellular location is the plastid. The protein localises to the chloroplast. It carries out the reaction 2 (2R)-3-phosphoglycerate + 2 H(+) = D-ribulose 1,5-bisphosphate + CO2 + H2O. The catalysed reaction is D-ribulose 1,5-bisphosphate + O2 = 2-phosphoglycolate + (2R)-3-phosphoglycerate + 2 H(+). Functionally, ruBisCO catalyzes two reactions: the carboxylation of D-ribulose 1,5-bisphosphate, the primary event in carbon dioxide fixation, as well as the oxidative fragmentation of the pentose substrate in the photorespiration process. Both reactions occur simultaneously and in competition at the same active site. The protein is Ribulose bisphosphate carboxylase large chain of Mesostigma viride (Green alga).